A 150-amino-acid chain; its full sequence is Dihydroneopterin triphosphate diphosphatase (150 aa).

One can recognise a Nudix hydrolase domain in the interval 5 to 146 (VYKRPVSILV…SNRQAIEQFV (142 aa)). Residues lysine 7, arginine 29, and threonine 40 each contribute to the substrate site. Positions 41 to 62 (GSVEEGETAPQAAMREVKEEVT) match the Nudix box motif. Residues glutamate 56 and glutamate 60 each coordinate Mg(2+). Residue 81-84 (FEIF) coordinates substrate. Glutamate 117 is a Mg(2+) binding site. Serine 135 contributes to the substrate binding site.

The protein belongs to the Nudix hydrolase family. The cofactor is Mg(2+).

The enzyme catalyses 7,8-dihydroneopterin 3'-triphosphate + H2O = 7,8-dihydroneopterin 3'-phosphate + diphosphate + H(+). Catalyzes the hydrolysis of dihydroneopterin triphosphate to dihydroneopterin monophosphate and pyrophosphate. Required for efficient folate biosynthesis. Can also hydrolyze nucleoside triphosphates with a preference for dATP. In Escherichia coli O157:H7, this protein is Dihydroneopterin triphosphate diphosphatase (nudB).